The chain runs to 33 residues: Brevinin-2Rh (33 aa).

A disulfide bond links C27 and C33.

In terms of tissue distribution, expressed by the skin glands.

It localises to the secreted. Functionally, antimicrobial peptide. This chain is Brevinin-2Rh, found in Pelophylax ridibundus (Marsh frog).